Here is a 179-residue protein sequence, read N- to C-terminus: Large ribosomal subunit protein uL22c (179 aa).

The protein belongs to the universal ribosomal protein uL22 family. In terms of assembly, part of the 50S ribosomal subunit.

The protein localises to the plastid. The protein resides in the chloroplast. In terms of biological role, this protein binds specifically to 23S rRNA. Its function is as follows. The globular domain of the protein is located near the polypeptide exit tunnel on the outside of the subunit, while an extended beta-hairpin is found that lines the wall of the exit tunnel in the center of the 70S ribosome. In Ranunculus macranthus (Large buttercup), this protein is Large ribosomal subunit protein uL22c (rpl22).